A 213-amino-acid polypeptide reads, in one-letter code: ATP phosphoribosyltransferase (213 aa).

It belongs to the ATP phosphoribosyltransferase family. Short subfamily. Heteromultimer composed of HisG and HisZ subunits.

It is found in the cytoplasm. The catalysed reaction is 1-(5-phospho-beta-D-ribosyl)-ATP + diphosphate = 5-phospho-alpha-D-ribose 1-diphosphate + ATP. It functions in the pathway amino-acid biosynthesis; L-histidine biosynthesis; L-histidine from 5-phospho-alpha-D-ribose 1-diphosphate: step 1/9. Its function is as follows. Catalyzes the condensation of ATP and 5-phosphoribose 1-diphosphate to form N'-(5'-phosphoribosyl)-ATP (PR-ATP). Has a crucial role in the pathway because the rate of histidine biosynthesis seems to be controlled primarily by regulation of HisG enzymatic activity. This Shouchella clausii (strain KSM-K16) (Alkalihalobacillus clausii) protein is ATP phosphoribosyltransferase.